A 55-amino-acid polypeptide reads, in one-letter code: Large ribosomal subunit protein bL33 (55 aa).

The protein belongs to the bacterial ribosomal protein bL33 family.

In Rhizobium etli (strain CIAT 652), this protein is Large ribosomal subunit protein bL33.